We begin with the raw amino-acid sequence, 133 residues long: MEPISHLVKSSLPNYLSSLPVPDSIGGWFKLSFKDWLALIPPTVVVAGIGYTAYLAYCPAARASCSAKISGRCNNQIRKNEPKVVDMIDVEDIAEKAAFCRCWKTKNWPYCDGSHGEHNKQTGDNVGPIVIKK.

The Lumenal portion of the chain corresponds to 1 to 35; the sequence is MEPISHLVKSSLPNYLSSLPVPDSIGGWFKLSFKD. A helical membrane pass occupies residues 36–58; sequence WLALIPPTVVVAGIGYTAYLAYC. Over 59 to 133 the chain is Cytoplasmic; sequence PAARASCSAK…DNVGPIVIKK (75 aa). [2Fe-2S] cluster contacts are provided by cysteine 100, cysteine 102, cysteine 111, and histidine 115.

This sequence belongs to the CISD protein family. CISD2 subfamily. [2Fe-2S] cluster is required as a cofactor.

It localises to the endoplasmic reticulum membrane. This is CDGSH iron-sulfur domain-containing protein 2 homolog from Drosophila sechellia (Fruit fly).